A 201-amino-acid chain; its full sequence is Glutathione S-transferase GstA (201 aa).

Residues Met1 to Gln81 enclose the GST N-terminal domain. Glutathione contacts are provided by residues Cys10, Lys35, Val52, Glu65–Gly66, Asn99, and Thr103–His106. In terms of domain architecture, GST C-terminal spans Asn87–Lys201.

This sequence belongs to the GST superfamily. Beta family. In terms of assembly, homodimer.

The protein resides in the cytoplasm. The catalysed reaction is RX + glutathione = an S-substituted glutathione + a halide anion + H(+). Functionally, conjugation of reduced glutathione to a wide number of exogenous and endogenous hydrophobic electrophiles. The protein is Glutathione S-transferase GstA (gstA) of Escherichia coli O157:H7.